Reading from the N-terminus, the 550-residue chain is MRFNPQDWKEKSHTNFEGAWHDGPSVITPPGEDKKYPRLRYTRAQPHPIFATINRLREIYLSMGFDECENPVIVEESDIYRQFGPEAMAVLDRVFYIGGLPRPNVGISRKQLDEINDILQSHRSPLVHGHEIPAGDSGNKEPFRPMSRETEEQLRETLHAYKKSEIDGDELTHELAKVLGVDDGIVVHILDSVFPEFRSLVPESSRSTLRSHMTSGWFMTLGSLWERTPLPIKLFSVDRCFRREQAEGPTRLMTYHSASCVVAREDVTIEDGKAVSEALLSAFGYEDFRFQPDDKRSKYYMPDSQTEVYAKHPVHGWVEVATFGMYSPSALGEYGIGVPVMNLGLGVERLAMIAYNANDVRQLSYPQFFPRLAGDREIACAVHLREEPVTVEGKALALAIARVAAAHATEQGPCSFTVWEGTLYGRNVNVIIEETEANAKLCGPACANEIFVHEGNILGVPDNEKWKDVRIKGIPTGISYLSAVSALAAANIEHAARCGTGTQVQVKMAKHPGDINLKIEEYAMRTITDTKKKVDVRGPVFLAVRSEIAE.

The tract at residues 1–32 (MRFNPQDWKEKSHTNFEGAWHDGPSVITPPGE) is disordered. Residues 212–214 (HMT), 257–259 (SAS), 299–300 (YY), and Asn-342 contribute to the substrate site.

The protein belongs to the class-II aminoacyl-tRNA synthetase family. O-phosphoseryl-tRNA(Cys) synthetase subfamily. As to quaternary structure, homotetramer. Interacts with SepCysS.

It carries out the reaction tRNA(Cys) + O-phospho-L-serine + ATP = O-phospho-L-seryl-tRNA(Cys) + AMP + diphosphate. Catalyzes the attachment of O-phosphoserine (Sep) to tRNA(Cys). This Methanoregula boonei (strain DSM 21154 / JCM 14090 / 6A8) protein is O-phosphoserine--tRNA(Cys) ligase.